Consider the following 114-residue polypeptide: MDDLEAIRQKRLAELQQQQSSPQNDAQAAYQQEQAQAERDEQVKAVLRQVMTPEARERLTRLRLSRKELVEQLESQLVMLAQNGRLQTKIDDEKLKVLLTQMQPQKRQTSITRM.

The segment at 14–37 is disordered; that stretch reads ELQQQQSSPQNDAQAAYQQEQAQA. Residues 16 to 35 show a composition bias toward low complexity; the sequence is QQQQSSPQNDAQAAYQQEQA.

The protein belongs to the PDCD5 family.

This is DNA-binding protein Mbur_0117 from Methanococcoides burtonii (strain DSM 6242 / NBRC 107633 / OCM 468 / ACE-M).